A 236-amino-acid polypeptide reads, in one-letter code: Dual specificity protein phosphatase 15 (236 aa).

Glycine 2 carries N-myristoyl glycine lipidation. The Tyrosine-protein phosphatase domain occupies 4–144 (GMTKVLPGLY…LEEFGWANSQ (141 aa)). Cysteine 88 (phosphocysteine intermediate) is an active-site residue. Residues 178 to 213 (GPGTSAPSATTASSAASEGTLQRLVPRSPRESHRPL) are disordered. Low complexity predominate over residues 181–194 (TSAPSATTASSAAS).

This sequence belongs to the protein-tyrosine phosphatase family. Non-receptor class dual specificity subfamily.

The protein localises to the cell membrane. The enzyme catalyses O-phospho-L-tyrosyl-[protein] + H2O = L-tyrosyl-[protein] + phosphate. It catalyses the reaction O-phospho-L-seryl-[protein] + H2O = L-seryl-[protein] + phosphate. The catalysed reaction is O-phospho-L-threonyl-[protein] + H2O = L-threonyl-[protein] + phosphate. Functionally, may play a role in the regulation of oligodendrocyte differentiation. May play a role in the regulation of myelin formation. Involved in the regulation of Erk1/2 phosphorylation in Schwann cells; the signaling may be linked to the regulation of myelination. May dephosphorylate MAPK13, ATF2, ERBB3, PDGFRB and SNX6. The chain is Dual specificity protein phosphatase 15 (Dusp15) from Rattus norvegicus (Rat).